A 111-amino-acid polypeptide reads, in one-letter code: MRLLFLVLLVLLGLIQYPLWLGKGGWFKVWDLQRQVAAQHETNDGLRARNAALEAEVRDLATGVGAIEERARSELGMMREGEVFVQIVPPGTPVPQPAPGAPGQTASAPRR.

The Cytoplasmic segment spans residues 1 to 3; it reads MRL. Residues 4–21 form a helical membrane-spanning segment; the sequence is LFLVLLVLLGLIQYPLWL. The Periplasmic segment spans residues 22–111; the sequence is GKGGWFKVWD…PGQTASAPRR (90 aa). Residues 31 to 62 are a coiled coil; it reads DLQRQVAAQHETNDGLRARNAALEAEVRDLAT. The interval 88-111 is disordered; sequence VPPGTPVPQPAPGAPGQTASAPRR. Positions 90–100 are enriched in pro residues; the sequence is PGTPVPQPAPG. Residues 101 to 111 are compositionally biased toward low complexity; the sequence is APGQTASAPRR.

It belongs to the FtsB family. As to quaternary structure, part of a complex composed of FtsB, FtsL and FtsQ.

Its subcellular location is the cell inner membrane. Functionally, essential cell division protein. May link together the upstream cell division proteins, which are predominantly cytoplasmic, with the downstream cell division proteins, which are predominantly periplasmic. This Bordetella petrii (strain ATCC BAA-461 / DSM 12804 / CCUG 43448) protein is Cell division protein FtsB.